The primary structure comprises 357 residues: DNA replication and repair protein RecF (357 aa).

An ATP-binding site is contributed by 30 to 37; that stretch reads GANGSGKT.

It belongs to the RecF family.

Its subcellular location is the cytoplasm. In terms of biological role, the RecF protein is involved in DNA metabolism; it is required for DNA replication and normal SOS inducibility. RecF binds preferentially to single-stranded, linear DNA. It also seems to bind ATP. The protein is DNA replication and repair protein RecF of Enterobacter sp. (strain 638).